Reading from the N-terminus, the 599-residue chain is Estrogen receptor (599 aa).

The interval 1–188 (MTMTLHTKAS…IMESAKETRY (188 aa)) is modulating (transactivation AF-1); mediates interaction with MACROD1. O-linked (GlcNAc) serine glycosylation is present at serine 10. The interval 35–47 (MERALGEVYVDNS) is required for interaction with NCOA1. An interaction with DDX5; self-association region spans residues 35–178 (MERALGEVYV…LSSSNEKGNM (144 aa)). Threonine 50 carries an O-linked (GlcNAc) threonine glycan. Residues serine 108 and serine 110 each carry the phosphoserine; by CDK2 modification. Position 122 is a phosphoserine (serine 122). Residues 147-175 (DTGPPAFYRSNSDNRRQNGRERLSSSNEK) form a disordered region. Positions 158-169 (SDNRRQNGRERL) are enriched in basic and acidic residues. Serine 171 is modified (phosphoserine; by CK2). 2 NR C4-type zinc fingers span residues 189-209 (CAVC…CEGC) and 225-249 (CPAT…LRKC). Residues 189–254 (CAVCNDYASG…RLRKCYEVGM (66 aa)) constitute a DNA-binding region (nuclear receptor). The segment at 189 to 314 (CAVCNDYASG…TKKNSPALSL (126 aa)) is mediates interaction with DNTTIP2. Residues 255–314 (MKGGIRKDRRGGRMLKHKRQRDDLEGRNEMGASGDMRAANLWPSPLVIKHTKKNSPALSL) form a hinge region. At arginine 264 the chain carries Asymmetric dimethylarginine; by PRMT1. The tract at residues 266–599 (GRMLKHKRQR…PEAEGFPNTI (334 aa)) is interaction with AKAP13. Positions 268–599 (MLKHKRQRDD…PEAEGFPNTI (332 aa)) are self-association. The NR LBD domain occupies 315–551 (TADQMVSALL…DLLLEMLDAH (237 aa)). The interval 315-599 (TADQMVSALL…PEAEGFPNTI (285 aa)) is transactivation AF-2. 2 residues coordinate 17beta-estradiol: glutamate 357 and arginine 398. A lipid anchor (S-palmitoyl cysteine) is attached at cysteine 451. Histidine 528 provides a ligand contact to 17beta-estradiol. Position 541 is a phosphotyrosine; by Tyr-kinases (tyrosine 541). Positions 557–581 (ASRMGVPPEEPSQTQLATTSSTSAH) are disordered. A compositionally biased stretch (low complexity) spans 568–581 (SQTQLATTSSTSAH). The O-linked (GlcNAc) threonine glycan is linked to threonine 575.

It belongs to the nuclear hormone receptor family. NR3 subfamily. Interacts with BCAS3. Binds DNA as a homodimer. Can form a heterodimer with ESR2. Interacts with coactivator NCOA5. Interacts with PELP1, the interaction is enhanced by 17-beta-estradiol; the interaction increases ESR1 transcriptional activity. Interacts with NCOA7; the interaction is ligand-inducible. Interacts with AKAP13, CUEDC2, HEXIM1, KDM5A, MAP1S, SMARD1, and UBE1C. Interacts with MUC1; the interaction is stimulated by 7 beta-estradiol (E2) and enhances ESR1-mediated transcription. Interacts with DNTTIP2, and UIMC1. Interacts with KMT2D/MLL2. Interacts with ATAD2; the interaction is enhanced by estradiol. Interacts with KIF18A and LDB1. Interacts with RLIM (via its C-terminus). Interacts with MACROD1. Interacts with SH2D4A and PLCG. Interacts with SH2D4A; the interaction blocks binding to PLCG and inhibits estrogen-induced cell proliferation. Interacts with DYNLL1. Interacts with CCDC62; the interaction requires estradiol and appears to enhance the transcription of target genes. Interacts with NR2C1; the interaction prevents homodimerization of ESR1 and suppresses its transcriptional activity and cell growth. Interacts with DNAAF4. Interacts with PRMT2. Interacts with RBFOX2. Interacts with EP300; the interaction is estrogen-dependent and enhanced by CITED1. Interacts with CITED1; the interaction is estrogen-dependent. Interacts with FAM120B, FOXL2, PHB2 and SLC30A9. Interacts with coactivators NCOA3 and NCOA6. Interacts with STK3/MST2 only in the presence of SAV1 and vice-versa. Binds to CSNK1D. Interacts with NCOA2; NCOA2 can interact with ESR1 AF-1 and AF-2 domains simultaneously and mediate their transcriptional synergy. Interacts with DDX5. Interacts with NCOA1; the interaction seems to require a self-association of N-terminal and C-terminal regions. Interacts with ZNF366, DDX17, NFKB1, RELA, SP1 and SP3. Interacts with NRIP1. Interacts with GPER1; the interaction occurs in an estrogen-dependent manner. Interacts with CLOCK and the interaction is stimulated by estrogen. Interacts with BCAS3. Interacts with TRIP4 (ufmylated); estrogen dependent. Interacts with LMTK3; the interaction phosphorylates ESR1 (in vitro) and protects it against proteasomal degradation. Interacts with CCAR2 (via N-terminus) in a ligand-independent manner. Interacts with ZFHX3. Interacts with SFR1 in a ligand-dependent and -independent manner. Interacts with DCAF13, LATS1 and DCAF1; regulates ESR1 ubiquitination and ubiquitin-mediated proteasomal degradation. Interacts (via DNA-binding domain) with POU4F2 isoform 2 (C-terminus); this interaction increases the estrogen receptor ESR1 transcriptional activity in a DNA- and ligand 17-beta-estradiol-independent manner. Interacts with ESRRB isoform 1. Interacts with UBE3A and WBP2. Interacts with GTF2B. Interacts with RBM39. In the absence of hormonal ligand, interacts with TACC1. Interacts with PI3KR1 or PI3KR2 and PTK2/FAK1. Interacts with SRC. Interacts with BAG1; the interaction is promoted in the absence of estradiol (17-beta-estradiol/E2). Interacts with and ubiquitinated by STUB1; the interaction is promoted in the absence of estradiol (17-beta-estradiol/E2). Interacts with NEDD8. Phosphorylated by cyclin A/CDK2 and CK1. Phosphorylation probably enhances transcriptional activity. Dephosphorylation at Ser-122 by PPP5C inhibits its transactivation activity. Phosphorylated by LMTK3 (in vitro). Post-translationally, ubiquitinated. Deubiquitinated by OTUB1. In terms of processing, palmitoylated at Cys-451 by ZDHHC7 and ZDHHC21. This modification is required for plasma membrane targeting and for rapid intracellular signaling via ERK and AKT kinases and cAMP generation, but not for signaling mediated by the nuclear hormone receptor. Ubiquitinated; regulated by LATS1 via DCAF1 it leads to ESR1 proteasomal degradation. Deubiquitinated by OTUB1. Ubiquitinated by STUB1/CHIP; in the CA1 hippocampal region following loss of endogenous circulating estradiol (17-beta-estradiol/E2). Ubiquitinated by UBR5, leading to its degradation: UBR5 specifically recognizes and binds ligand-bound ESR1 when it is not associated with coactivators (NCOAs). In presence of NCOAs, the UBR5-degron is not accessible, preventing its ubiquitination and degradation. Post-translationally, dimethylated by PRMT1 at Arg-264. The methylation may favor cytoplasmic localization. Demethylated by JMJD6 at Arg-264.

It localises to the nucleus. The protein resides in the cytoplasm. The protein localises to the golgi apparatus. It is found in the cell membrane. Nuclear hormone receptor. The steroid hormones and their receptors are involved in the regulation of eukaryotic gene expression and affect cellular proliferation and differentiation in target tissues. Ligand-dependent nuclear transactivation involves either direct homodimer binding to a palindromic estrogen response element (ERE) sequence or association with other DNA-binding transcription factors, such as AP-1/c-Jun, c-Fos, ATF-2, Sp1 and Sp3, to mediate ERE-independent signaling. Ligand binding induces a conformational change allowing subsequent or combinatorial association with multiprotein coactivator complexes through LXXLL motifs of their respective components. Mutual transrepression occurs between the estrogen receptor (ER) and NF-kappa-B in a cell-type specific manner. Decreases NF-kappa-B DNA-binding activity and inhibits NF-kappa-B-mediated transcription from the IL6 promoter and displace RELA/p65 and associated coregulators from the promoter. Recruited to the NF-kappa-B response element of the CCL2 and IL8 promoters and can displace CREBBP. Present with NF-kappa-B components RELA/p65 and NFKB1/p50 on ERE sequences. Can also act synergistically with NF-kappa-B to activate transcription involving respective recruitment adjacent response elements; the function involves CREBBP. Can activate the transcriptional activity of TFF1. Also mediates membrane-initiated estrogen signaling involving various kinase cascades. Essential for MTA1-mediated transcriptional regulation of BRCA1 and BCAS3. Maintains neuronal survival in response to ischemic reperfusion injury when in the presence of circulating estradiol (17-beta-estradiol/E2). This Mus musculus (Mouse) protein is Estrogen receptor (Esr1).